Here is a 102-residue protein sequence, read N- to C-terminus: Large ribosomal subunit protein uL24 (102 aa).

It belongs to the universal ribosomal protein uL24 family. As to quaternary structure, part of the 50S ribosomal subunit.

Functionally, one of two assembly initiator proteins, it binds directly to the 5'-end of the 23S rRNA, where it nucleates assembly of the 50S subunit. In terms of biological role, one of the proteins that surrounds the polypeptide exit tunnel on the outside of the subunit. In Polynucleobacter asymbioticus (strain DSM 18221 / CIP 109841 / QLW-P1DMWA-1) (Polynucleobacter necessarius subsp. asymbioticus), this protein is Large ribosomal subunit protein uL24.